Here is a 513-residue protein sequence, read N- to C-terminus: Nuclear pore complex protein NUP58 (513 aa).

Disordered stretches follow at residues 28-62, 217-239, and 356-513; these read QTNS…QPQQ, SVGS…GQQQ, and RETA…TTRR. A compositionally biased stretch (polar residues) spans 30 to 50; it reads NSIFSQSQPQQTNSIFSQSQP. Low complexity-rich tracts occupy residues 51 to 62 and 217 to 227; these read QQTNSIFSQPQQ and SVGSQPSQGQG. The span at 356–365 shows a compositional bias: basic and acidic residues; it reads RETAKQEAAA. A compositionally biased stretch (low complexity) spans 377–386; the sequence is STTSTQPSTQ. The span at 393 to 427 shows a compositional bias: polar residues; the sequence is SSATPGGSNPPQTSVPTSNPSSGAGFSFLNTPASG. The span at 428–446 shows a compositional bias: low complexity; that stretch reads PSSSLFATPSSTAPTSSLF. 6 tandem repeats follow at residues 446 to 447, 458 to 459, 466 to 467, 473 to 474, 486 to 487, and 497 to 498. A 6 X 2 AA repeats of F-G region spans residues 446-498; that stretch reads FGPSPTPTQTPLFGSSPASTFGSTQSLFGQTTPSLTMPSQFGGATPGSGASFG. A compositionally biased stretch (polar residues) spans 452 to 484; the sequence is PTQTPLFGSSPASTFGSTQSLFGQTTPSLTMPS. Over residues 504–513 the composition is skewed to basic residues; that stretch reads SRPKSRTTRR.

This sequence belongs to the NUP58 family. As to quaternary structure, part of the nuclear pore complex (NPC). The NPC has an eight-fold symmetrical structure comprising a central transport channel and two rings, the cytoplasmic and nuclear rings, to which eight filaments are attached. The cytoplasmic filaments have loose ends, while the nuclear filaments are joined in a distal ring, forming a nuclear basket. NPCs are highly dynamic in configuration and composition, and can be devided in 3 subcomplexes, the NUP62 subcomplex, the NUP107-160 subcomplex and the NUP93 subcomplex, containing approximately 30 different nucleoporin proteins. Interacts with GAI, NUP62, SKP1A and SKP1B. Ubiquitous. Higherst expression in cauline leaves, lowest in roots.

The protein resides in the nucleus envelope. The protein localises to the nucleus. Its subcellular location is the nuclear pore complex. In terms of biological role, involved in nucleocytoplasmic trafficking. May have regulatory roles in the gibberellin pathway, in auxin signaling and in light perception. The sequence is that of Nuclear pore complex protein NUP58 from Arabidopsis thaliana (Mouse-ear cress).